A 159-amino-acid chain; its full sequence is Eukaryotic translation initiation factor 5A-2 (159 aa).

A compositionally biased stretch (basic and acidic residues) spans 1 to 12 (MSDEEHQFESKA). The tract at residues 1–23 (MSDEEHQFESKADAGASKTYPQQ) is disordered. Hypusine is present on lysine 52.

It belongs to the eIF-5A family. Post-translationally, lys-52 undergoes hypusination, a unique post-translational modification that consists in the addition of a butylamino group from spermidine to lysine side chain, leading to the formation of the unusual amino acid hypusine. eIF-5As are the only known proteins to undergo this modification, which is essential for their function.

Translation factor that promotes translation elongation and termination, particularly upon ribosome stalling at specific amino acid sequence contexts. Binds between the exit (E) and peptidyl (P) site of the ribosome and promotes rescue of stalled ribosome: specifically required for efficient translation of polyproline-containing peptides as well as other motifs that stall the ribosome. Acts as a ribosome quality control (RQC) cofactor by joining the RQC complex to facilitate peptidyl transfer during CAT tailing step. This Nicotiana plumbaginifolia (Leadwort-leaved tobacco) protein is Eukaryotic translation initiation factor 5A-2 (EIF-5A2).